A 367-amino-acid chain; its full sequence is Terpene cyclase verU1 (367 aa).

The chain crosses the membrane as a helical span at residues 8-28; sequence IRCSLLLLGLVGIYTVWISSF. Residue N50 is glycosylated (N-linked (GlcNAc...) asparagine). 8 helical membrane passes run 57-77, 85-105, 120-140, 169-189, 197-217, 239-259, 292-312, and 327-347; these read FTGI…YWPV, LSLI…LFAL, MAMF…PIYC, CLLG…PAVV, IIAL…LTHL, ISAM…SLLA, FQWD…GLHI, and LIPE…AALY. An N-linked (GlcNAc...) asparagine glycan is attached at N352.

Belongs to the membrane-bound ascI terpene cyclase family.

Its subcellular location is the membrane. It participates in secondary metabolite biosynthesis; terpenoid biosynthesis. Its pathway is mycotoxin biosynthesis. In terms of biological role, terpene cyclase; part of the gene cluster that mediates the biosynthesis of the neurotoxin verrucosidin, a methylated alpha-pyrone polyketide that inhibits oxidative phosphorylation in mitochondria and thereby causes neurological diseases. The carbon backbone of verrucosidin is synthesized by the HR-PKS verA, and further modified by the other verrucodidin cluster enzymes. This Penicillium polonicum protein is Terpene cyclase verU1.